Here is a 331-residue protein sequence, read N- to C-terminus: 6-phosphogluconolactonase (331 aa).

Lys-287 is subject to N6-acetyllysine.

The protein belongs to the cycloisomerase 2 family.

The enzyme catalyses 6-phospho-D-glucono-1,5-lactone + H2O = 6-phospho-D-gluconate + H(+). Its pathway is carbohydrate degradation; pentose phosphate pathway; D-ribulose 5-phosphate from D-glucose 6-phosphate (oxidative stage): step 2/3. Catalyzes the hydrolysis of 6-phosphogluconolactone to 6-phosphogluconate. In Escherichia coli O7:K1 (strain IAI39 / ExPEC), this protein is 6-phosphogluconolactonase.